Reading from the N-terminus, the 171-residue chain is Der GTPase-activating protein YihI (171 aa).

Disordered regions lie at residues 1 to 99 and 145 to 171; these read MKKP…QAEL and LSYD…RGGN. Residues 20–30 are compositionally biased toward basic and acidic residues; the sequence is TREELNQEARD. Residues 31–40 are compositionally biased toward basic residues; sequence RKRLKKHRGH. Over residues 147–160 the composition is skewed to acidic residues; sequence YDDDDEDDEEDEKQ.

It belongs to the YihI family. Interacts with Der.

In terms of biological role, a GTPase-activating protein (GAP) that modifies Der/EngA GTPase function. May play a role in ribosome biogenesis. The protein is Der GTPase-activating protein YihI of Salmonella choleraesuis (strain SC-B67).